Consider the following 179-residue polypeptide: X-linked lymphocyte-regulated protein 5C (179 aa).

The segment covering 1-11 (MSNKEQKDMKK) has biased composition (basic and acidic residues). The segment at 1-75 (MSNKEQKDMK…MQDFKGDDGT (75 aa)) is disordered. The span at 42-53 (GTSGMGSHSSGS) shows a compositional bias: low complexity. Over residues 56–75 (QEAREPVQKKMQDFKGDDGT) the composition is skewed to basic and acidic residues. A coiled-coil region spans residues 146–175 (ITQQQMKILQTAIEDHETKLKNAKDMCDTF).

This sequence belongs to the XLR/SYCP3 family. Expressed in testis (at protein level). Also expressed in ovary. Not detected in other tissues tested.

Its subcellular location is the nucleus. The protein resides in the chromosome. The chain is X-linked lymphocyte-regulated protein 5C from Mus musculus (Mouse).